The sequence spans 605 residues: Elongation factor 4 (605 aa).

The tr-type G domain occupies lysine 11–lysine 193. Residues aspartate 23 to threonine 28 and asparagine 140 to aspartate 143 each bind GTP.

Belongs to the TRAFAC class translation factor GTPase superfamily. Classic translation factor GTPase family. LepA subfamily.

It localises to the cell membrane. The enzyme catalyses GTP + H2O = GDP + phosphate + H(+). In terms of biological role, required for accurate and efficient protein synthesis under certain stress conditions. May act as a fidelity factor of the translation reaction, by catalyzing a one-codon backward translocation of tRNAs on improperly translocated ribosomes. Back-translocation proceeds from a post-translocation (POST) complex to a pre-translocation (PRE) complex, thus giving elongation factor G a second chance to translocate the tRNAs correctly. Binds to ribosomes in a GTP-dependent manner. This Phytoplasma australiense protein is Elongation factor 4.